The primary structure comprises 417 residues: Calreticulin (417 aa).

Residues 1 to 17 form the signal peptide; it reads MLLPVPLLLGLLGLAAA. Residues 18-197 form an N-domain region; that stretch reads DPTVYFKEQF…NSQVESGSLE (180 aa). Residue Gln26 coordinates Ca(2+). Position 48 is an N6-acetyllysine (Lys48). Residues Lys62 and Lys64 each contribute to the Ca(2+) site. Lys64 bears the N6-(2-hydroxyisobutyryl)lysine mark. Residues Tyr109, Lys111, Tyr128, and Asp135 each contribute to the an alpha-D-glucoside site. A disulfide bridge links Cys137 with Cys163. Lys159 bears the N6-acetyllysine mark. Asn179 carries N-linked (GlcNAc...) asparagine glycosylation. One copy of the 1-1 repeat lies at 191-202; the sequence is VESGSLEDDWDF. The interval 191–255 is 4 X approximate repeats; sequence VESGSLEDDW…DAKKPEDWDE (65 aa). The tract at residues 193 to 270 is disordered; that stretch reads SGSLEDDWDF…WEPPVIQNPE (78 aa). A P-domain region spans residues 198–308; that stretch reads DDWDFLPPKK…YSPDSNIYAY (111 aa). Residues 207-251 show a composition bias toward basic and acidic residues; that stretch reads KIKDPDAAKPEDWDDRAKIDDPTDSKPEDWDKPEHIPDPDAKKPE. Lys209 bears the N6-acetyllysine mark. 6 repeat units span residues 210–221, 227–238, 244–255, 259–269, 273–283, and 287–297. An interaction with PPIB region spans residues 237 to 270; that stretch reads DKPEHIPDPDAKKPEDWDEEMDGEWEPPVIQNPE. A compositionally biased stretch (acidic residues) spans 252-261; it reads DWDEEMDGEW. Positions 259 to 297 are 3 X approximate repeats; sequence GEWEPPVIQNPEYKGEWKPRQIDNPEYKGIWIHPEIDNP. Positions 309 to 417 are C-domain; the sequence is ENFAVLGLDL…AAAGQAKDEL (109 aa). Position 317 (Asp317) interacts with an alpha-D-glucoside. Asp328 is a binding site for Ca(2+). The segment at 350–417 is disordered; sequence TKAAEKQMKD…AAAGQAKDEL (68 aa). A compositionally biased stretch (basic and acidic residues) spans 352–378; it reads AAEKQMKDKQDEEQRLHEEEEEKKGKE. The segment covering 379 to 408 has biased composition (acidic residues); the sequence is EEEADKDDDEDKDEDEEDEDEKEEEEEEDA. The short motif at 414–417 is the Prevents secretion from ER element; it reads KDEL.

This sequence belongs to the calreticulin family. Monomer. Component of an EIF2 complex at least composed of CELF1/CUGBP1, CALR, CALR3, EIF2S1, EIF2S2, HSP90B1 and HSPA5. Interacts with PDIA3/ERp57 and SPACA9. Interacts with TRIM21. Interacts with NR3C1. Interacts with PPIB. Interacts (via P-domain) with PDIA5. Interacts with GABARAP. Interacts with CLCC1.

The protein localises to the endoplasmic reticulum lumen. The protein resides in the cytoplasm. It is found in the cytosol. It localises to the secreted. Its subcellular location is the extracellular space. The protein localises to the extracellular matrix. The protein resides in the cell surface. It is found in the sarcoplasmic reticulum lumen. It localises to the cytoplasmic vesicle. Its subcellular location is the secretory vesicle. The protein localises to the cortical granule. The protein resides in the cytolytic granule. Functionally, calcium-binding chaperone that promotes folding, oligomeric assembly and quality control in the endoplasmic reticulum (ER) via the calreticulin/calnexin cycle. This lectin interacts transiently with almost all of the monoglucosylated glycoproteins that are synthesized in the ER. Interacts with the DNA-binding domain of NR3C1 and mediates its nuclear export. Involved in maternal gene expression regulation. May participate in oocyte maturation via the regulation of calcium homeostasis. Present in the cortical granules of non-activated oocytes, is exocytosed during the cortical reaction in response to oocyte activation and might participate in the block to polyspermy. The polypeptide is Calreticulin (CALR) (Bos taurus (Bovine)).